The following is a 105-amino-acid chain: UPF0145 protein lpp0255 (105 aa).

The protein belongs to the UPF0145 family.

The chain is UPF0145 protein lpp0255 from Legionella pneumophila (strain Paris).